The chain runs to 531 residues: Fatty acid--[acyl-carrier-protein] ligase MmaC (531 aa).

T169 is a Mg(2+) binding site. ATP-binding residues include I218, V308, and S312. Residue E313 participates in Mg(2+) binding. D403 serves as a coordination point for ATP.

The protein belongs to the ATP-dependent AMP-binding enzyme family. Mg(2+) is required as a cofactor.

It catalyses the reaction a (2E)-enoyl fatty acid + holo-[ACP] + ATP = a (2E)-enoyl-[ACP] + AMP + diphosphate. The enzyme catalyses a (2E)-enoyl fatty acid + ATP + H(+) = a (2E)-2-fatty-enoyl-AMP + diphosphate. The catalysed reaction is a (2E)-2-fatty-enoyl-AMP + holo-[ACP] = a (2E)-enoyl-[ACP] + AMP + H(+). It carries out the reaction (2E)-decenoate + holo-[ACP] + ATP = (2E)-decenoyl-[ACP] + AMP + diphosphate. It catalyses the reaction a (3R)-3-isocyanyl-fatty acid + holo-[ACP] + ATP = a (3R)-3-isocyanyl-fatty acyl-[ACP] + AMP + diphosphate. The enzyme catalyses a (3R)-3-isocyanyl-fatty acid + ATP + H(+) = a (3R)-3-isocyanyl-fatty acyl-AMP + diphosphate. The catalysed reaction is a (3R)-3-isocyanyl-fatty acyl-AMP + holo-[ACP] = a (3R)-3-isocyanyl-fatty acyl-[ACP] + AMP + H(+). Acyl:acyl-carrier protein ligase involved in the biosynthesis of a unique class of isonitrile lipopeptides (INLPs) that seem to play a role in metal acquisition in M.marinum. Acts twice during the INLP pathway, catalyzing the activation of (2E)-2-decenoate as well as probably the corresponding (3R)-3-isocyanyl-fatty acid as acyl-adenylates (acyl-AMP), and then the acyl transfer to the dedicated acyl-carrier protein MmaB. The sequence is that of Fatty acid--[acyl-carrier-protein] ligase MmaC from Mycobacterium marinum (strain ATCC BAA-535 / M).